We begin with the raw amino-acid sequence, 711 residues long: MLNPIVRKFQYGQHTVTLETGMMARQATAAVMVSMDDTAVFVTVVGQKKAKPGQDFFPLTVNYQERTYAAGRIPGSFFRREGRPSEGETLIARLIDRPIRPLFPEGFVNEVQVIATVVSVNPQVNPDIVAMIGASAALSLSGIPFNGPIGAARVGYINDQYVLNPTQDELKESKLDLVVAGTEAAVLMVESEAELLSEDQMLGAVVFGHEQQQVVIQNINELVKEAGKPRWDWQPEPVNEALNARVAALAEARLSDAYRITDKQERYAQVDVIKSETIATLLAEDETLDENELGEILHAIEKNVVRSRVLAGEPRIDGREKDMIRGLDVRTGVLPRTHGSALFTRGETQALVTATLGTARDAQVLDELMGERTDTFLFHYNFPPYSVGETGMVGSPKRREIGHGRLAKRGVLAVMPDMDKFPYTVRVVSEITESNGSSSMASVCGASLALMDAGVPIKAAVAGIAMGLVKEGDNYVVLSDILGDEDHLGDMDFKVAGSRDGISALQMDIKIEGITKEIMQVALNQAKGARLHILGVMEQAINAPRGDISEFAPRIHTIKINPDKIKDVIGKGGSVIRALTEETGTTIEIEDDGTVKIAATDGEKAKNAIRRIEEITAEIEVGRVYNGKVTRIVDFGAFVAIGGGKEGLVHISQIADKRVEKVTDYLQMGQEVPVKVLEVDRQGRIRLSIKEATEQSQPAAAPEAPAAEQGE.

2 residues coordinate Mg(2+): aspartate 486 and aspartate 492. In terms of domain architecture, KH spans 553-612 (PRIHTIKINPDKIKDVIGKGGSVIRALTEETGTTIEIEDDGTVKIAATDGEKAKNAIRRI). An S1 motif domain is found at 622–690 (GRVYNGKVTR…RQGRIRLSIK (69 aa)). A disordered region spans residues 689-711 (IKEATEQSQPAAAPEAPAAEQGE). Over residues 694 to 711 (EQSQPAAAPEAPAAEQGE) the composition is skewed to low complexity.

This sequence belongs to the polyribonucleotide nucleotidyltransferase family. In terms of assembly, component of the RNA degradosome, which is a multiprotein complex involved in RNA processing and mRNA degradation. Mg(2+) serves as cofactor.

The protein localises to the cytoplasm. The enzyme catalyses RNA(n+1) + phosphate = RNA(n) + a ribonucleoside 5'-diphosphate. Its function is as follows. Involved in mRNA degradation. Catalyzes the phosphorolysis of single-stranded polyribonucleotides processively in the 3'- to 5'-direction. In Escherichia fergusonii (strain ATCC 35469 / DSM 13698 / CCUG 18766 / IAM 14443 / JCM 21226 / LMG 7866 / NBRC 102419 / NCTC 12128 / CDC 0568-73), this protein is Polyribonucleotide nucleotidyltransferase.